Reading from the N-terminus, the 334-residue chain is Short-chain dehydrogenase/reductase (334 aa).

NADP(+) is bound by residues Leu-44, Lys-68, Asp-93, Asn-120, and Lys-152. Active-site proton donor residues include Ser-176 and Tyr-205. The NADP(+) site is built by Tyr-205, Lys-209, and Asn-239. The Lowers pKa of active site Tyr role is filled by Lys-209.

Belongs to the short-chain dehydrogenases/reductases (SDR) family.

It participates in mycotoxin biosynthesis. In terms of biological role, short-chain dehydrogenase/reductase; part of the 2 gene clusters that mediate the biosynthesis of fusicoccins, diterpene glucosides that display phytohormone-like activity and function as potent activators of plasma membrane H(+)-ATPases in plants by modifying 14-3-3 proteins and cause the plant disease constriction canker. The first step in the pathway is performed by the fusicoccadiene synthase PaFS that possesses both prenyl transferase and terpene cyclase activity, converting isopentenyl diphosphate and dimethylallyl diphosphate into geranylgeranyl diphosphate (GGDP) and successively converting GGDP into fusicocca-2,10(14)-diene, a precursor for fusicoccin H. The second step is the oxidation at the C-8 position by the cytochrome P450 monooxygenase PaP450-2 to yield fusicocca-2,10(14)-diene-8-beta-ol. The cytochrome P450 monooxygenase PaP450-1 then catalyzes the hydroxylation at the C-16 position to produce fusicocca-2,10(14)-diene-8-beta,16-diol. The dioxygenase fc-dox then catalyzes the 16-oxydation of fusicocca-2,10(14)-diene-8-beta,16-diol to yield an aldehyde (8-beta-hydroxyfusicocca-1,10(14)-dien-16-al). The short-chain dehydrogenase/reductase fc-sdr catalyzes the reduction of the aldehyde to yield fusicocca-1,10(14)-diene-8-beta,16-diol. The next step is the hydroxylation at C-9 performed by the cytochrome P450 monooxygenase PaP450-3 that leads to fusicoccin H aglycon which is glycosylated to fusicoccin H by the O-glycosyltransferase PaGT. Hydroxylation at C-12 by the cytochrome P450 monooxygenase PaP450-4 leads then to the production of fusicoccin Q and is followed by methylation by the O-methyltransferase PaMT to yield fusicoccin P. Fusicoccin P is further converted to fusicoccin J via prenylation by the O-glucose prenyltransferase PaPT. Cytochrome P450 monooxygenase PaP450-5 then performs hydroxylation at C-19 to yield dideacetyl-fusicoccin A which is acetylated to 3'-O-deacetyl-fusicoccin A by the O-acetyltransferase PaAT-2. Finally, a another acetylation by the O-acetyltransferase PaAT-1 yields fusicoccin A. The sequence is that of Short-chain dehydrogenase/reductase from Phomopsis amygdali (Fusicoccum amygdali).